A 369-amino-acid chain; its full sequence is Chorismate synthase (369 aa).

NADP(+) is bound by residues R48 and R54. Residues 125–127 (RSS), 238–239 (NA), G278, 293–297 (KPTSS), and R319 contribute to the FMN site.

This sequence belongs to the chorismate synthase family. In terms of assembly, homotetramer. FMNH2 is required as a cofactor.

The enzyme catalyses 5-O-(1-carboxyvinyl)-3-phosphoshikimate = chorismate + phosphate. It functions in the pathway metabolic intermediate biosynthesis; chorismate biosynthesis; chorismate from D-erythrose 4-phosphate and phosphoenolpyruvate: step 7/7. In terms of biological role, catalyzes the anti-1,4-elimination of the C-3 phosphate and the C-6 proR hydrogen from 5-enolpyruvylshikimate-3-phosphate (EPSP) to yield chorismate, which is the branch point compound that serves as the starting substrate for the three terminal pathways of aromatic amino acid biosynthesis. This reaction introduces a second double bond into the aromatic ring system. This chain is Chorismate synthase, found in Burkholderia mallei (strain NCTC 10229).